The primary structure comprises 3961 residues: MTSSEPIAIIGSACRFPGGADTPSKLWELLKEPRDLLQKVPEKRRWHSEAFYHKDPEHHGTSNVSSSYFLDDDPASFDNTFFNIQPSECEAIDPQQRMLMETVYDSVCSAGQTIDGLRGSSTAVYVGMMCDDWSAILTKDAESIPQYSATGMGRSIMSNRISYFFDWHGPSITLDTACSSSLVAVHLAVQALRNGDCGTAIAAGVNLCLSPGMYIATSNLHMLSEGARSRMWDKDVDGYARGEGIASVVLKPLSAAIRDGDHIECLIRATGVNQDGKTQGLTMPSATAQTALIRQTYERAGLDIEKPEDRPQFFHAHGTGTPAGDPQEAEAISTAFYSGGLSDKLYVGSIKTVIGHTEGTAGLASLIGTSLALQHGVIPPNLLFNELNPRLIPFYNNLEVPTSAKPWPQLLPGQARRASVNSFGFGGTNAHAIVEAYEPPTSSGAADNVFAPLVFSAATEKSLRASLSAHGDYLQANPQVPLRNFAYTLQERRSTLAFRAVIPASNTTDAVERINALLDDADSVELGTKHFATPHPRLLGVFTGQGAQWPRMGAQIVEASPYASKKLGELDTALATLPPDVRPSWTLREEILADLEVSKVAEAAISQPLCTAVQILLVDLLTAAGIRFDAVVGHSSGEIGAAYAAGFISAETAIRVAYLRGFYAKLAGAAEMKGSMMAVGTSYEDALEFCQLEHFMGRISVAAVNSDSSITLSGNEDAIMEAVEIFKDEGKFARQLKVDTAYHSVHMLPCSEPYLKAMESVTQSTAPRDNTAGPRPTWYSSVLDGAVMGPGEVNSEYWVSNMVNPVLFSAAVAAAVSATGPFNLALEVGPHPALKGPCLDTLAAASGDSIPYSGLLSRSKNDILELSSALGFVWANLGASSVRFGDFEKLISGVSENPRPVKDLPKYAFDHTRSFWQISRASGAQFLAQDPPHPILGKRCLERETSQHVEWRNILSPKELPWLQGHRIQGGMVFPAAGYVAMAIEAMKIAVGKSRMSLIHIENLHIGRAMAFNQETSTMECLFRLNIVNSSPDSMKAKFSCCSGAPYETGTTMVLNAEGTVTVTLAEPEPDAIPYMKPKNFNMTEIEVDRFYTQIHKLGYEYSAPFRGMLSIQRKNAYALGTMEDQGGSDWEDQLLVHPGMLDTAIQSSSAAFGCPGDGMMWTLYIPTGIQSIIINPYYTTYATEKQEVLPWETISRGMVNTRTSMDINIFSQDNAHTFIQVEGLELVPFTAARPEDDANIFSSLEYRIDSPSGDLAVINDGWDSHSSEAAIKGERVSFFYLRRLLEEITPEEKEKTLPHYRHLLNWAAHVVARVSAGKNPCVPASCMQDTQEIIDSMWDGVRNRADIRLIESVGRNLIKVVREGSGILEHMDGLFDFYDQGLGLDRANRHLARMVGQLAHRYPHMNIFEIGAGTGGSTRNILSAIREEFSTYTYTDVSSGFFEAAQELFQDYEDRMIYSTYNMEHEPTSQGFEEGHYDLLLASNVLHATDKLEEMMLSARKLLKPGGYLIALELTNNDSMRVGLPMGTLPGWWLGAETGRPWGPTVTLPQWDSLLRKCGFGGIDTSTPIQHRLQASTIFAAQAVDDRVNLLRNPLSLVNNLPLTDAPRLVIIGGESLATHAIANNISSLLASHYSEIVRIVSFADLDLDVLPYGTAVLSLADLDEPVFKDISPAKLDALKTLWRQAFNIVWVTQGARAAEPYSSMMIGLGRAMIHEYPTISLQLMDIDTIADESRATQLIAKEFIRLELLNTFKRGTKSNLDLLWSIESEVTFEGSARLIPRLYLNKEANARYNSARRSIETQVNWKASLVTVALQGDTYGLSKPSPLRLPISQPSDTKVTSLNVSHFLLQGLKIDGLNPLVLCAGTERSTGKHLLALSHSLESQPEIQTKWSAPLPSGSDPSQIIAAVAAEIIADQITKLHTRSGIMIIHEATEQLAVALHTRAQTLGCQIVFTTSSKDHAQRGWQFIPQNISRRLIKRTLPADSNVFIDLSYSSASVAAGRLISGSVSKSCAKYTSDAFYSASVSSEFDLESSTKVEEAFQQAYDSVTQSKTGLVDPITIPIQEIGDVSVSQKPLAVVVSSATNLAVKVEAIDSGVIFRQDKTYLLIGMSGQVGQSLCQWMVKCGARHVVLTSRRPLVHDDFIESMKDLGANVRTFALDITQRESLHKCYEEIVATMPPIAGVANGAMILRDSMFDGMTFQNLTTVLEPKVAGTRYLDELFYDAPLDFFIVLSSITSLVGNSSQSNYTAANMFMVALVEQRRKRGVPGSAISISALIGIGYVENSEFTGEYFENIGLRNISEQDLHQQFAEAILAGRPETQGSSEVAIGLIPFYPERDDKAQFHTDIKFNHLMLERKDAQIHGGKGSALPVRVQLAEAKTKDQAATIIKDGFMVRLKRTLMIGLDEVVNEKVPLVEQGIDSLMAVEIRAWFLKELDVDIPVLKVLGGSNITELLQEAMDRTPSTIIDFSSLSNAKAAAPVTNTATPPPEVQVTGSASDSSRSLTPDGLSTSRPSTPVRTPMTEINDPTPSFSLLSVAPDIAPKVPESVSPMSYGQARFWFLSDYLEDKTSFNMTVMFKLTGRLQVPRLERAVRTIAHRHDALRTRFFWGGEGDKRIAMQGISAESSIELEHVRINSEADAKNELRKMHEFVWDLDSHQAARMVLLTINENEHYFMTSGHHISWDGYGFTVLFIDLDAAYRGEPLSPNGPETQYPAFAAWQRDTYAAGAMKKSIDEYYRPMIDPEARPLPLFPFARAPNRPLLDHFEQFEAKVTLQPHVVSKLKQVSRKNGATMFHLYLAALQALVFRLLPEEQSFYLGVADANRLDKNFMGSLGFFLNLLPVRFDRTAPGTKSSDMIKDTRNKAYKALENSFVPWDVLLHELKIPRTNTEAPIFQLFVDYRQIVRERAQWCGCSMSDEDWLNARNGYDLTLGITDNPTGESLLSLRFQKKLYSEESTEMFLRSYVNVLEALASGKDLLVDDLPRWAGADVEEALNVGRGPQLELEWPVTVSHRIDQMIGTYASKPALQDEHNNCMSYEQMGHRINTIAAALIQAGTTTGTPVGVFQTPSSDWICSMLAIFRVGATYIPLDLRNSVARVSFIVEIAQPLILLTDRETTLHVAEIQASNATEIIIPDLSTTTMPLSMENQARPDSPAVTLFTSGTTGRPKGVVLTHANLRAQCEGYSRMVNLQSMTSVVLQQTNYNFDVSLDQIFAALAEGGCLYVVPASKRGDPQAITKIMAEKGVTYTVATPSEYETWFRYAPETLAECKSWGYAFGGGEHLNNGLIGEFAALSTRHIPELRLFNNYGPTEASLAITKGEVDFKRPDLEKHVPAGMTIPNYAVAIVDENLKPVPLETVGEIVAGGPGVAAGYLGQADLTREKFISGHDVHRLAAQHSDRWYRTGDRGYLRPDGALFVHGRILGDTQVKIRGFRVELQEIENVVLETAKGALTHAVVSLRGTGEDKFLTAHVVFAPDFAMHLRQDLIRHLEAALPLPSYMQPTVIVPLTKVPVTTNFKIDRNAIQAMPLPQAVAGTDNLANMEGRVAALWRIIIPHLTQELTPESDFFAVGGNSILLVKLQAAIKRELQSSPQLIDLINSSSLEGMARHVRAAFINRIDWDLETAVPADLKEDLEVLTSQPRKHGQDDLTVVITGSTGYLGRHVLAHLVDSSNVRQIICLVRPEHLQTASPLSTSSKIRLVAADISQPSLGLGAQTFAELAQITDIVFHCAANRSFWDGFESLRHVNFDAAKELARLCVANDAVLHFMSSGAVSKYNDISPPTDGSDGYIASKWAAEEFLRRVAKFGLRVQVHRPLALPSEKVSSLSQEDLKRVQDELPRLIAQIGQRPEFSAIHGHIDVRPVSDVATTLVEDMLVSSVQESGNEATVKNHAAHLRLQIKTFAEQIDADEELSKLPTMDALQWFGAAKRAGFGWLIGAMEMHIEGDDQSGTTTQVLVQR.

The 433-residue stretch at 4–436 (SEPIAIIGSA…GTNAHAIVEA (433 aa)) folds into the Ketosynthase family 3 (KS3) domain. Active-site for beta-ketoacyl synthase activity residues include C178, H317, and H356. The interval 541–867 (VFTGQGAQWP…RSKNDILELS (327 aa)) is malonyl-CoA:ACP transacylase (MAT) domain. Residues 933–1068 (HPILGKRCLE…GTVTVTLAEP (136 aa)) are N-terminal hotdog fold. A dehydratase (DH) domain region spans residues 933-1234 (HPILGKRCLE…LELVPFTAAR (302 aa)). Positions 933–1236 (HPILGKRCLE…LVPFTAARPE (304 aa)) constitute a PKS/mFAS DH domain. H966 functions as the Proton acceptor; for dehydratase activity in the catalytic mechanism. Positions 1083 to 1236 (MTEIEVDRFY…LVPFTAARPE (154 aa)) are C-terminal hotdog fold. D1143 functions as the Proton donor; for dehydratase activity in the catalytic mechanism. The tract at residues 1376-1569 (FDFYDQGLGL…GFGGIDTSTP (194 aa)) is methyltransferase (MT) domain. Residues 2106–2277 (TYLLIGMSGQ…GVPGSAISIS (172 aa)) are ketoreductase (KR) domain. Positions 2386-2464 (QAATIIKDGF…ELLQEAMDRT (79 aa)) constitute a Carrier 1 domain. S2424 carries the post-translational modification O-(pantetheine 4'-phosphoryl)serine. A disordered region spans residues 2482–2527 (PVTNTATPPPEVQVTGSASDSSRSLTPDGLSTSRPSTPVRTPMTEI). The segment covering 2495–2520 (VTGSASDSSRSLTPDGLSTSRPSTPV) has biased composition (polar residues). Residues 2553–2993 (PMSYGQARFW…DLPRWAGADV (441 aa)) are condensation (C) domain. Positions 3019–3424 (QMIGTYASKP…DGALFVHGRI (406 aa)) are adenylation (A) (KR) domain. One can recognise a Carrier 2 domain in the interval 3542-3616 (ANMEGRVAAL…GMARHVRAAF (75 aa)). S3576 is subject to O-(pantetheine 4'-phosphoryl)serine. The interval 3725-3871 (ITDIVFHCAA…VRPVSDVATT (147 aa)) is reductase (RED) domain.

It in the C-terminal section; belongs to the NRP synthetase family.

The protein operates within secondary metabolite biosynthesis. Functionally, hybrid PKS-NRPS synthetase; part of the gene cluster that mediates the biosynthesis of the trans-fused decalin-containing tetramic acid phomasetin, the stereochemical opposite of the HIV-1 integrase inhibitor equisetin. The PKS module of phm1 together with the enoylreductase phm4 catalyze the formation of the polyketide unit which is then conjugated to L-serine by the condensation domain of the phm1 NRPS module. Activity of the Dieckmann cyclase domain (RED) of phm1 results in release of the Dieckmann product intermediate. The Diels-Alderase phm7 then uses the Dieckmann product of phm1 as substrate and catalyzes the Diels-Alder cycloaddition to form the decalin ring of N-desmethylphomasetin. N-desmethylphomasetin is further methylated to phomasetin by the methyltransferase phm5. This chain is Hybrid PKS-NRPS synthetase phm1, found in Pyrenochaetopsis sp.